A 536-amino-acid polypeptide reads, in one-letter code: MRDIEEIIKEIGLGRDDYELYGRYMAKLDLGLQNRGRPRAKLILVTAMTPTPAGEGKTTTTIGLGQAMKKLGKNVAIAIREPSLGPCFGIKGGATGGGKSKVEPSDRINLFFTGDFPTITAAHNLLSAMINNHMYHGNELNLDPKRITFPRTIDMNDRSLRSILVGVGPRDMGVLAGDSFVITPASEVMAITGLSLNYQDLKARLSRILAGFTTKNKPVFAGDLKAEGSMAALLRDALKPNLVQTTEGVPAFVHTGPFGNIAHGTSSLVADKIALNLFDYVITEAGFGSDLGAEKFFNLASRIGDLPINAVVLVATIRAIKHHGGSKKEGEDIDAVKTGSKNLIRHVQNIRNFGIDPVVAVNRFPTDTDGEIRALGEILDSNGIKWALSEVFAKGGEGGIDLANKVLASLGSHEIKRTYDLKDDIRTKIEKIARNVYGADGVIFEKKALSDMKKAEEIMENPYVCMAKTQYSFSDDASLLNDPHGFTIKVQSINISSGAGFVVPILGEIMTMPGLPKHPAAENIDLTDSGEITGLF.

An ATP-binding site is contributed by 51 to 58 (TPAGEGKT).

This sequence belongs to the formate--tetrahydrofolate ligase family.

The catalysed reaction is (6S)-5,6,7,8-tetrahydrofolate + formate + ATP = (6R)-10-formyltetrahydrofolate + ADP + phosphate. The protein operates within one-carbon metabolism; tetrahydrofolate interconversion. The sequence is that of Formate--tetrahydrofolate ligase from Thermoplasma acidophilum (strain ATCC 25905 / DSM 1728 / JCM 9062 / NBRC 15155 / AMRC-C165).